Here is a 547-residue protein sequence, read N- to C-terminus: Rho GTPase-activating protein 36 (547 aa).

A signal peptide spans 1–40 (MGGCIPFLKAARALCPRIMPPLLLLSAFIFLVSVLGGAPG). One can recognise a Rho-GAP domain in the interval 226 to 426 (MSLNPIAKQI…AMIDNWDVLF (201 aa)). The disordered stretch occupies residues 485-547 (AVLAQSKPSD…AKTGVSYFFP (63 aa)). The span at 524-539 (EQDRPLLRVPREKEAK) shows a compositional bias: basic and acidic residues.

In terms of assembly, may interacts (via the Rho-GAP domain) with the active form of RAC1. As to expression, detected in the outer root sheath of hair follicles at the level of the stem cell bulge, during the anagen and telogen phases of hair growth (at protein level).

In terms of biological role, GTPase activator for the Rho-type GTPases by converting them to an inactive GDP-bound state. The chain is Rho GTPase-activating protein 36 (ARHGAP36) from Homo sapiens (Human).